Here is a 110-residue protein sequence, read N- to C-terminus: UPF0122 protein Sca_0859 (110 aa).

It belongs to the UPF0122 family.

Its function is as follows. Might take part in the signal recognition particle (SRP) pathway. This is inferred from the conservation of its genetic proximity to ftsY/ffh. May be a regulatory protein. This Staphylococcus carnosus (strain TM300) protein is UPF0122 protein Sca_0859.